The sequence spans 266 residues: Putative [LysW]-aminoadipate/[LysW]-glutamate kinase (266 aa).

Substrate contacts are provided by residues 36-37 (GG), R63, and N168.

This sequence belongs to the acetylglutamate kinase family. LysZ subfamily.

Its subcellular location is the cytoplasm. It catalyses the reaction [amino-group carrier protein]-C-terminal-N-(1,4-dicarboxybutan-1-yl)-L-glutamine + ATP = [amino-group carrier protein]-C-terminal-N-(1-carboxy-5-phosphooxy-5-oxopentan-1-yl)-L-glutamine + ADP. It carries out the reaction [amino-group carrier protein]-C-terminal-gamma-(L-glutamyl)-L-glutamate + ATP = [amino-group carrier protein]-C-terminal-gamma-(5-phospho-L-glutamyl)-L-glutamate + ADP. Its pathway is amino-acid biosynthesis; L-lysine biosynthesis via AAA pathway; L-lysine from L-alpha-aminoadipate (Thermus route): step 2/5. The protein operates within amino-acid biosynthesis; L-arginine biosynthesis. Functionally, involved in both the arginine and lysine biosynthetic pathways. Phosphorylates the LysW-bound precursors glutamate (for arginine biosynthesis), respectively alpha-aminoadipate (for lysine biosynthesis). This chain is Putative [LysW]-aminoadipate/[LysW]-glutamate kinase, found in Cenarchaeum symbiosum (strain A).